The chain runs to 1244 residues: ATP-dependent RNA helicase DHX8 (1244 aa).

Lys-140 is covalently cross-linked (Glycyl lysine isopeptide (Lys-Gly) (interchain with G-Cter in SUMO2)). Disordered regions lie at residues 152-289 (LMPS…PAIG) and 361-396 (DVDQ…RPTH). The segment covering 160-169 (EKQRDPEHRD) has biased composition (basic and acidic residues). Residues 170 to 179 (RTKKKKRSRS) are compositionally biased toward basic residues. Residues 180-220 (RDRDRDRDRDRDRDRDRDRDRDKDRERDRDRERDRERDRER) are compositionally biased toward basic and acidic residues. A compositionally biased stretch (basic residues) spans 221–234 (DHKRRHRSRSRSHS). The span at 256-283 (FKDRKDREKYGERNLDRWRDKHVDRPPP) shows a compositional bias: basic and acidic residues. The 72-residue stretch at 289–360 (GDIYNGKVTS…TGTKTSLSMK (72 aa)) folds into the S1 motif domain. The segment covering 386–395 (TSMRNPDRPT) has biased composition (basic and acidic residues). Ser-419 is modified (phosphoserine). Residue Lys-423 forms a Glycyl lysine isopeptide (Lys-Gly) (interchain with G-Cter in SUMO2) linkage. A Phosphoserine modification is found at Ser-484. Positions 599-762 (VQAVHDNQIL…FYEAPIFTIP (164 aa)) constitute a Helicase ATP-binding domain. 612-619 (GETGSGKT) serves as a coordination point for ATP. The short motif at 709–712 (DEAH) is the DEAH box element. The 181-residue stretch at 780 to 960 (YLDASLITVM…STVLSLKAMG (181 aa)) folds into the Helicase C-terminal domain.

It belongs to the DEAD box helicase family. DEAH subfamily. DDX8/PRP22 sub-subfamily. As to quaternary structure, identified in the spliceosome C complex. Interacts with ARRB2; the interaction is detected in the nucleus upon OR1D2 stimulation. Interacts with SRRM2. Interacts with CACTIN.

The protein resides in the nucleus. The catalysed reaction is ATP + H2O = ADP + phosphate + H(+). Its function is as follows. Involved in pre-mRNA splicing as component of the spliceosome. Facilitates nuclear export of spliced mRNA by releasing the RNA from the spliceosome. This chain is ATP-dependent RNA helicase DHX8 (Dhx8), found in Mus musculus (Mouse).